We begin with the raw amino-acid sequence, 71 residues long: Long neurotoxin 1 (71 aa).

Disulfide bonds link cysteine 3–cysteine 20, cysteine 14–cysteine 41, cysteine 26–cysteine 30, cysteine 45–cysteine 56, and cysteine 57–cysteine 62.

Belongs to the three-finger toxin family. Long-chain subfamily. Type II alpha-neurotoxin sub-subfamily. In terms of tissue distribution, expressed by the venom gland.

It localises to the secreted. In terms of biological role, binds with high affinity to muscular (alpha-1/CHRNA1) and neuronal (alpha-7/CHRNA7) nicotinic acetylcholine receptor (nAChR) and inhibits acetylcholine from binding to the receptor, thereby impairing neuromuscular and neuronal transmission. This chain is Long neurotoxin 1, found in Naja haje haje (Egyptian cobra).